The sequence spans 118 residues: MSRANVLSLYRRVLRIARSWKAQSSIPKDTDTEKKYITQEARTLFRQNQQITDPESIQRCMEECEARIEIGLHYRNPYPRPTYLPPMGLATQKGRKLRAQQRLRKQAKPVYLQSQDET.

The tract at residues 91–118 (TQKGRKLRAQQRLRKQAKPVYLQSQDET) is disordered. The segment covering 93 to 107 (KGRKLRAQQRLRKQA) has biased composition (basic residues).

This sequence belongs to the complex I LYR family.

This is LYR motif containing protein 1 (lyrm1) from Danio rerio (Zebrafish).